The chain runs to 97 residues: MSTEYGIALGMIETRGLVPAIEAADAMTKAAEVRLVSREFVGGGYVTVLVRGETGAVNAAVRAGADACERVGDGLVAAHIIARPHKEVEPVLTMEKK.

One can recognise a BMC domain in the interval 8-93 (ALGMIETRGL…PHKEVEPVLT (86 aa)).

It belongs to the bacterial microcompartments protein family. CsoS1 subfamily. Homohexamer with a small central pore.

The protein localises to the carboxysome. Functionally, one of shell proteins of the carboxysome, a polyhedral inclusion where RuBisCO (ribulose bisphosphate carboxylase, ccbL-ccbS) is sequestered. Assembles into hexamers which make sheets that form the facets of the polyhedral carboxysome. The shell probably limits the diffusion of CO(2) into and out of the carboxysome. This is Carboxysome shell protein CsoS1B from Hydrogenovibrio crunogenus (strain DSM 25203 / XCL-2) (Thiomicrospira crunogena).